Here is a 237-residue protein sequence, read N- to C-terminus: Demethylmenaquinone methyltransferase (237 aa).

Residues Thr58, Asp79, and 106-107 contribute to the S-adenosyl-L-methionine site; that span reads NA.

Belongs to the class I-like SAM-binding methyltransferase superfamily. MenG/UbiE family.

It catalyses the reaction a 2-demethylmenaquinol + S-adenosyl-L-methionine = a menaquinol + S-adenosyl-L-homocysteine + H(+). It participates in quinol/quinone metabolism; menaquinone biosynthesis; menaquinol from 1,4-dihydroxy-2-naphthoate: step 2/2. In terms of biological role, methyltransferase required for the conversion of demethylmenaquinol (DMKH2) to menaquinol (MKH2). This Listeria innocua serovar 6a (strain ATCC BAA-680 / CLIP 11262) protein is Demethylmenaquinone methyltransferase.